Consider the following 395-residue polypeptide: Elongation factor Tu (395 aa).

The tr-type G domain maps to 10-204 (KPHVNVGTIG…AVDEYIPEPT (195 aa)). The tract at residues 19–26 (GHVDHGKT) is G1. 19–26 (GHVDHGKT) serves as a coordination point for GTP. Thr26 is a binding site for Mg(2+). Residues 60 to 64 (GITIA) are G2. Residues 81-84 (DCPG) form a G3 region. Residues 81 to 85 (DCPGH) and 136 to 139 (NKVD) contribute to the GTP site. The segment at 136–139 (NKVD) is G4. The G5 stretch occupies residues 174-176 (SAL).

The protein belongs to the TRAFAC class translation factor GTPase superfamily. Classic translation factor GTPase family. EF-Tu/EF-1A subfamily. In terms of assembly, monomer.

It localises to the cytoplasm. It catalyses the reaction GTP + H2O = GDP + phosphate + H(+). GTP hydrolase that promotes the GTP-dependent binding of aminoacyl-tRNA to the A-site of ribosomes during protein biosynthesis. The polypeptide is Elongation factor Tu (Exiguobacterium sibiricum (strain DSM 17290 / CCUG 55495 / CIP 109462 / JCM 13490 / 255-15)).